Reading from the N-terminus, the 384-residue chain is 23S rRNA (uracil(747)-C(5))-methyltransferase RlmC (384 aa).

[4Fe-4S] cluster contacts are provided by C7, C15, C18, and C94. Residues Q219, F248, E269, and N316 each contribute to the S-adenosyl-L-methionine site. C343 (nucleophile) is an active-site residue.

It belongs to the class I-like SAM-binding methyltransferase superfamily. RNA M5U methyltransferase family. RlmC subfamily.

The catalysed reaction is uridine(747) in 23S rRNA + S-adenosyl-L-methionine = 5-methyluridine(747) in 23S rRNA + S-adenosyl-L-homocysteine + H(+). Its function is as follows. Catalyzes the formation of 5-methyl-uridine at position 747 (m5U747) in 23S rRNA. This Shewanella sp. (strain ANA-3) protein is 23S rRNA (uracil(747)-C(5))-methyltransferase RlmC.